The sequence spans 475 residues: FAD-dependent monooxygenase spyC (475 aa).

The first 24 residues, 1–24, serve as a signal peptide directing secretion; that stretch reads MTAKPPFKVIIVGGSIAGLTLAHC. Residues glutamate 36, glycine 50, arginine 109, aspartate 310, and alanine 323 each contribute to the FAD site. Residues 444–464 traverse the membrane as a helical segment; it reads LLIPFLYPVVAFSLCVLAWIG.

The protein belongs to the paxM FAD-dependent monooxygenase family. It depends on FAD as a cofactor.

Its subcellular location is the membrane. It carries out the reaction (2E,6E,10E)-geranylgeranyl-triacetate lactone + AH2 + O2 = (S)-(2E,6E,10E)-epoxygeranylgeranyl-triacetate lactone + A + H2O. It participates in secondary metabolite biosynthesis; terpenoid biosynthesis. Functionally, FAD-dependent monooxygenase spyC; part of the gene cluster that mediates the biosynthesis of meroterpenoids called sartorypyrones. Within the pathway, spyC catalyzes the epoxidation of geranylgeranyl-triacetate lactone at the terminal olein to yield epoxygeranylgeranyl-triacetate lactone. The biosynthesis of sartorypyrones begins with the production of triacetic acid lactone (TAL) by the NR-PKS spyA using one molecule of acetyl-CoA and two molecules of malonyl-CoA. The prenyltransferase spyF then conjugates geranylgeranyl pyrophosphate (GGPP) to TAL to form geranylgeranyl-triacetate lactone, for which the pathway-specific geranylgeranyl pyrophosphate synthase (GGPS) spyE is required to provide GGPP. Subsequently, geranylgeranyl-triacetate lactone is epoxidized at the terminal olein by the FAD-dependent monooxygenase spyC, followed by cyclization of the terpenoid component catalyzed by the terpene cyclase spyD to produce both the bicyclic sartorypyrone F and the monocyclic sartorypyrone D. Finally, the last step of the biosynthesis involves the acetylation of the meroterpenoids sartorypyrones D and F by the acetyltransferase SpyB to produce sartorypyrones A and G, respectively. This is FAD-dependent monooxygenase spyC from Aspergillus fumigatus (strain ATCC MYA-4609 / CBS 101355 / FGSC A1100 / Af293) (Neosartorya fumigata).